The primary structure comprises 101 residues: Urease subunit beta (101 aa).

It belongs to the urease beta subunit family. As to quaternary structure, heterotrimer of UreA (gamma), UreB (beta) and UreC (alpha) subunits. Three heterotrimers associate to form the active enzyme.

Its subcellular location is the cytoplasm. The catalysed reaction is urea + 2 H2O + H(+) = hydrogencarbonate + 2 NH4(+). It participates in nitrogen metabolism; urea degradation; CO(2) and NH(3) from urea (urease route): step 1/1. The polypeptide is Urease subunit beta (Burkholderia orbicola (strain AU 1054)).